We begin with the raw amino-acid sequence, 151 residues long: D-aminoacyl-tRNA deacylase (151 aa).

Positions 142-143 match the Gly-cisPro motif, important for rejection of L-amino acids motif; sequence GP.

The protein belongs to the DTD family. As to quaternary structure, homodimer.

It is found in the cytoplasm. The catalysed reaction is glycyl-tRNA(Ala) + H2O = tRNA(Ala) + glycine + H(+). It carries out the reaction a D-aminoacyl-tRNA + H2O = a tRNA + a D-alpha-amino acid + H(+). An aminoacyl-tRNA editing enzyme that deacylates mischarged D-aminoacyl-tRNAs. Also deacylates mischarged glycyl-tRNA(Ala), protecting cells against glycine mischarging by AlaRS. Acts via tRNA-based rather than protein-based catalysis; rejects L-amino acids rather than detecting D-amino acids in the active site. By recycling D-aminoacyl-tRNA to D-amino acids and free tRNA molecules, this enzyme counteracts the toxicity associated with the formation of D-aminoacyl-tRNA entities in vivo and helps enforce protein L-homochirality. The polypeptide is D-aminoacyl-tRNA deacylase (Psychrobacter arcticus (strain DSM 17307 / VKM B-2377 / 273-4)).